Reading from the N-terminus, the 362-residue chain is MSFNTFGHLFRVTTFGESHGVAIGCVVDGCPPLIPLTEADIQGDLDRRRPGQSRFTTQRQEADQVKILSGVMVHPETGVQVTTGTPIALLIENTDQRSKDYSDIQNKFRPGHADFTYEAKYGIRDYRGGGRSSARETASRVAAGAIARKVIAGMTVRGALVQIGPHKIDRDKWDWDEIGNNPFFCPDKDKAAFYADYLDGIRKSGSSIGAVVEIVAEGVPAGLGAPIYAKLDGDLAAALMSINAVKGVEIGDGFASAELTGEQNADEMRTGNHGPAFLSNHAGGILGGISTGQPVVARFAVKPTSSILTPRKTVDRTGHDTEILTKGRHDPCVGIRAVPVGEAMVACVLADHLLRHRGQVGG.

Positions 48 and 54 each coordinate NADP(+). FMN is bound by residues 131 to 133, 243 to 244, G287, 302 to 306, and R328; these read RSS, NA, and KPTSS.

This sequence belongs to the chorismate synthase family. In terms of assembly, homotetramer. It depends on FMNH2 as a cofactor.

The catalysed reaction is 5-O-(1-carboxyvinyl)-3-phosphoshikimate = chorismate + phosphate. It participates in metabolic intermediate biosynthesis; chorismate biosynthesis; chorismate from D-erythrose 4-phosphate and phosphoenolpyruvate: step 7/7. Catalyzes the anti-1,4-elimination of the C-3 phosphate and the C-6 proR hydrogen from 5-enolpyruvylshikimate-3-phosphate (EPSP) to yield chorismate, which is the branch point compound that serves as the starting substrate for the three terminal pathways of aromatic amino acid biosynthesis. This reaction introduces a second double bond into the aromatic ring system. In Rhodopseudomonas palustris (strain ATCC BAA-98 / CGA009), this protein is Chorismate synthase.